The sequence spans 156 residues: SCP2 sterol-binding domain-containing protein 1 (156 aa).

One can recognise an SCP2 domain in the interval 44–156 (NFSVFEDISQ…ERIFREWAKI (113 aa)).

This Mus musculus (Mouse) protein is SCP2 sterol-binding domain-containing protein 1 (Scp2d1).